Reading from the N-terminus, the 417-residue chain is NADH-quinone oxidoreductase subunit D (417 aa).

It belongs to the complex I 49 kDa subunit family. NDH-1 is composed of 14 different subunits. Subunits NuoB, C, D, E, F, and G constitute the peripheral sector of the complex.

The protein localises to the cell inner membrane. The enzyme catalyses a quinone + NADH + 5 H(+)(in) = a quinol + NAD(+) + 4 H(+)(out). Functionally, NDH-1 shuttles electrons from NADH, via FMN and iron-sulfur (Fe-S) centers, to quinones in the respiratory chain. The immediate electron acceptor for the enzyme in this species is believed to be ubiquinone. Couples the redox reaction to proton translocation (for every two electrons transferred, four hydrogen ions are translocated across the cytoplasmic membrane), and thus conserves the redox energy in a proton gradient. The protein is NADH-quinone oxidoreductase subunit D of Burkholderia multivorans (strain ATCC 17616 / 249).